The sequence spans 306 residues: Dihydroorotate dehydrogenase B (NAD(+)), catalytic subunit (306 aa).

Residues serine 22 and 46 to 47 (KT) contribute to the FMN site. Substrate contacts are provided by residues lysine 46, 70–74 (NSIGL), and asparagine 128. Asparagine 128 contributes to the FMN binding site. Cysteine 131 serves as the catalytic Nucleophile. Lysine 164 is a binding site for FMN. 191–192 (NT) contacts substrate. FMN contacts are provided by residues glycine 216, 242 to 243 (GG), and 264 to 265 (GS).

This sequence belongs to the dihydroorotate dehydrogenase family. Type 1 subfamily. Heterotetramer of 2 PyrK and 2 PyrD type B subunits. FMN is required as a cofactor.

It is found in the cytoplasm. It carries out the reaction (S)-dihydroorotate + NAD(+) = orotate + NADH + H(+). The protein operates within pyrimidine metabolism; UMP biosynthesis via de novo pathway; orotate from (S)-dihydroorotate (NAD(+) route): step 1/1. Catalyzes the conversion of dihydroorotate to orotate with NAD(+) as electron acceptor. This is Dihydroorotate dehydrogenase B (NAD(+)), catalytic subunit (pyrD) from Endomicrobium trichonymphae.